The sequence spans 408 residues: UDP-N-acetylglucosamine--N-acetylmuramyl-(pentapeptide) pyrophosphoryl-undecaprenol N-acetylglucosamine transferase (408 aa).

The segment at 1–20 (MNDTVKKPTGGRGDDPLPAG) is disordered. Residues 41–43 (TAG), asparagine 160, arginine 197, serine 231, and glutamine 327 contribute to the UDP-N-acetyl-alpha-D-glucosamine site.

The protein belongs to the glycosyltransferase 28 family. MurG subfamily.

The protein resides in the cell membrane. The catalysed reaction is di-trans,octa-cis-undecaprenyl diphospho-N-acetyl-alpha-D-muramoyl-L-alanyl-D-glutamyl-meso-2,6-diaminopimeloyl-D-alanyl-D-alanine + UDP-N-acetyl-alpha-D-glucosamine = di-trans,octa-cis-undecaprenyl diphospho-[N-acetyl-alpha-D-glucosaminyl-(1-&gt;4)]-N-acetyl-alpha-D-muramoyl-L-alanyl-D-glutamyl-meso-2,6-diaminopimeloyl-D-alanyl-D-alanine + UDP + H(+). It functions in the pathway cell wall biogenesis; peptidoglycan biosynthesis. Cell wall formation. Catalyzes the transfer of a GlcNAc subunit on undecaprenyl-pyrophosphoryl-MurNAc-pentapeptide (lipid intermediate I) to form undecaprenyl-pyrophosphoryl-MurNAc-(pentapeptide)GlcNAc (lipid intermediate II). This is UDP-N-acetylglucosamine--N-acetylmuramyl-(pentapeptide) pyrophosphoryl-undecaprenol N-acetylglucosamine transferase from Mycobacterium avium (strain 104).